Here is a 409-residue protein sequence, read N- to C-terminus: Gamma-glutamyl phosphate reductase (409 aa).

Belongs to the gamma-glutamyl phosphate reductase family.

It is found in the cytoplasm. The enzyme catalyses L-glutamate 5-semialdehyde + phosphate + NADP(+) = L-glutamyl 5-phosphate + NADPH + H(+). It functions in the pathway amino-acid biosynthesis; L-proline biosynthesis; L-glutamate 5-semialdehyde from L-glutamate: step 2/2. Its function is as follows. Catalyzes the NADPH-dependent reduction of L-glutamate 5-phosphate into L-glutamate 5-semialdehyde and phosphate. The product spontaneously undergoes cyclization to form 1-pyrroline-5-carboxylate. The protein is Gamma-glutamyl phosphate reductase of Mycobacterium leprae (strain TN).